The chain runs to 108 residues: Putative transmembrane protein ORF108 (108 aa).

Helical transmembrane passes span 11–31, 33–53, and 69–89; these read FIMG…SSII, IAMT…TVHF, and VGFL…LLII.

It localises to the host membrane. This is Putative transmembrane protein ORF108 from Acidianus hospitalis (AFV-1).